Here is a 398-residue protein sequence, read N- to C-terminus: Phosphoglycerate kinase (398 aa).

Substrate contacts are provided by residues 22-24 (DFN), arginine 38, 61-64 (HLGR), arginine 120, and arginine 153. ATP-binding positions include lysine 206, glycine 297, glutamate 328, and 354 to 357 (GGDT).

This sequence belongs to the phosphoglycerate kinase family. As to quaternary structure, monomer.

Its subcellular location is the cytoplasm. It catalyses the reaction (2R)-3-phosphoglycerate + ATP = (2R)-3-phospho-glyceroyl phosphate + ADP. It functions in the pathway carbohydrate degradation; glycolysis; pyruvate from D-glyceraldehyde 3-phosphate: step 2/5. This is Phosphoglycerate kinase from Nautilia profundicola (strain ATCC BAA-1463 / DSM 18972 / AmH).